The following is a 336-amino-acid chain: Dihydroorotate dehydrogenase (quinone) (336 aa).

FMN-binding positions include 62–66 (AGLDK) and Thr86. Lys66 provides a ligand contact to substrate. 111–115 (NRMGF) is a substrate binding site. FMN contacts are provided by Asn139 and Asn172. A substrate-binding site is contributed by Asn172. Residue Ser175 is the Nucleophile of the active site. Substrate is bound at residue Asn177. FMN contacts are provided by Lys217 and Thr245. 246–247 (NT) is a binding site for substrate. FMN is bound by residues Gly268, Gly297, and 318–319 (YS).

It belongs to the dihydroorotate dehydrogenase family. Type 2 subfamily. In terms of assembly, monomer. FMN serves as cofactor.

The protein localises to the cell membrane. It carries out the reaction (S)-dihydroorotate + a quinone = orotate + a quinol. It functions in the pathway pyrimidine metabolism; UMP biosynthesis via de novo pathway; orotate from (S)-dihydroorotate (quinone route): step 1/1. In terms of biological role, catalyzes the conversion of dihydroorotate to orotate with quinone as electron acceptor. The sequence is that of Dihydroorotate dehydrogenase (quinone) from Aliivibrio fischeri (strain MJ11) (Vibrio fischeri).